The chain runs to 544 residues: Dynein intermediate chain 1 (544 aa).

WD repeat units lie at residues 241–281 (KARS…YPVS), 289–330 (GHLE…RPSE), 342–387 (SQCI…QPSN), 402–441 (VMTS…NQHE), 461–501 (THKA…EAPV), and 506–544 (PDGK…NLAN).

It belongs to the dynein intermediate chain family.

It localises to the cytoplasm. Functionally, has a role in meiotic nuclear divsion where it promotes the movement of 'horsetails'. The sequence is that of Dynein intermediate chain 1 (dic1) from Schizosaccharomyces pombe (strain 972 / ATCC 24843) (Fission yeast).